The primary structure comprises 1318 residues: MSGGASATGPRRGPPGLEDTTSKKKQKDRANQESKDGDPRKETGSRYVAQAGLEPLASGDPSASASHAAGITGSRHRTRLFFPSSSGSASTPQEEQTKEGACEDPHDLLATPTPELLLDWRQSAEEVIVKLRVGVGPLQLEDVDAAFTDTDCVVRFAGGQQWGGVFYAEIKSSCAKVQTRKGSLLHLTLPKKVPMLTWPSLLVEADEQLCIPPLNSQTCLLGSEENLAPLAGEKAVPPGNDPVSPAMVRSRNPGKDDCAKEEMAVAADAATLVDEPESMVNLAFVKNDSYEKGPDSVVVHVYVKEICRDTSRVLFREQDFTLIFQTRDGNFLRLHPGCGPHTTFRWQVKLRNLIEPEQCTFCFTASRIDICLRKRQSQRWGGLEAPAARVGGAKVAVPTGPTPLDSTPPGGAPHPLTGQEEARAVEKDKSKARSEDTGLDSVATRTPMEHVTPKPETHLASPKPTCMVPPMPHSPVSGDSVEEEEEEEKKVCLPGFTGLVNLGNTCFMNSVIQSLSNTRELRDFFHDRSFEAEINYNNPLGTGGRLAIGFAVLLRALWKGTHHAFQPSKLKAIVASKASQFTGYAQHDAQEFMAFLLDGLHEDLNRIQNKPYTETVDSDGRPDEVVAEEAWQRHKMRNDSFIVDLFQGQYKSKLVCPVCAKVSITFDPFLYLPVPLPQKQKVLPVFYFAREPHSKPIKFLVSVSKENSTASEVLDSLSQSVHVKPENLRLAEVIKNRFHRVFLPSHSLDTVSPSDTLLCFELLSSELAKERVVVLEVQQRPQVPSVPISKCAACQRKQQSEDEKLKRCTRCYRVGYCNQLCQKTHWPDHKGLCRPENIGYPFLVSVPASRLTYARLAQLLEGYARYSVSVFQPPFQPGRMALESQSPGCTTLLSTGSLEAGDSERDPIQPPELQLVTPMAEGDTGLPRVWAAPDRGPVPSTSGISSEMLASGPIEVGSLPAGERVSRPEAAVPGYQHPSEAMNAHTPQFFIYKIDSSNREQRLEDKGDTPLELGDDCSLALVWRNNERLQEFVLVASKELECAEDPGSAGEAARAGHFTLDQCLNLFTRPEVLAPEEAWYCPQCKQHREASKQLLLWRLPNVLIVQLKRFSFRSFIWRDKINDLVEFPVRNLDLSKFCIGQKEEQLPSYDLYAVINHYGGMIGGHYTACARLPNDRSSQRSDVGWRLFDDSTVTTVDESQVVTRYAYVLFYRRRNSPVERPPRAGHSEHHPDLGPAAEAAASQASRIWQELEAEEEPVPEGSGPLGPWGPQDWVGPLPRGPTTPDEGCLRYFVLGTVAALVALVLNVFYPLVSQSRWR.

Residues 1-109 form a disordered region; it reads MSGGASATGP…GACEDPHDLL (109 aa). At 1–1291 the chain is on the cytoplasmic side; it reads MSGGASATGP…TTPDEGCLRY (1291 aa). Residues 28–44 are compositionally biased toward basic and acidic residues; sequence DRANQESKDGDPRKETG. The span at 83-94 shows a compositional bias: polar residues; the sequence is PSSSGSASTPQE. Positions 95-107 are enriched in basic and acidic residues; it reads EQTKEGACEDPHD. In terms of domain architecture, CS 1 spans 113 to 202; that stretch reads TPELLLDWRQ…VPMLTWPSLL (90 aa). Residues 234–255 form a disordered region; that stretch reads KAVPPGNDPVSPAMVRSRNPGK. S244 carries the phosphoserine modification. The region spanning 282–384 is the CS 2 domain; that stretch reads LAFVKNDSYE…RQSQRWGGLE (103 aa). A disordered region spans residues 390–479; sequence VGGAKVAVPT…PMPHSPVSGD (90 aa). Composition is skewed to basic and acidic residues over residues 420-436 and 447-457; these read EEAR…RSED and PMEHVTPKPET. Residues 497–1214 form the USP domain; that stretch reads TGLVNLGNTC…YAYVLFYRRR (718 aa). Catalysis depends on C506, which acts as the Nucleophile. Zn(2+) contacts are provided by C791, C794, C808, C811, C817, C821, H829, and C833. The segment at 791 to 833 adopts an MYND-type zinc-finger fold; that stretch reads CAACQRKQQSEDEKLKRCTRCYRVGYCNQLCQKTHWPDHKGLC. H1165 (proton acceptor) is an active-site residue. The span at 1218–1232 shows a compositional bias: basic and acidic residues; that stretch reads VERPPRAGHSEHHPD. Residues 1218 to 1239 form a disordered region; sequence VERPPRAGHSEHHPDLGPAAEA. A helical transmembrane segment spans residues 1292-1312; the sequence is FVLGTVAALVALVLNVFYPLV. Residues 1313-1318 are Lumenal-facing; the sequence is SQSRWR.

The protein belongs to the peptidase C19 family. As to quaternary structure, interacts with RNF123. Interacts with BIRC2/c-IAP1, BIRC3/c-IAP2 and XIAP/BIRC4. Interacts with HIF1A (via N-terminus). Interacts (via N-terminus) with HSP90AA1; this interaction activates the deubiquitinase activity of USP19.

The protein resides in the endoplasmic reticulum membrane. The enzyme catalyses Thiol-dependent hydrolysis of ester, thioester, amide, peptide and isopeptide bonds formed by the C-terminal Gly of ubiquitin (a 76-residue protein attached to proteins as an intracellular targeting signal).. Functionally, deubiquitinating enzyme that regulates the degradation of various proteins by removing ubiquitin moieties, thereby preventing their proteasomal degradation. Stabilizes RNF123, which promotes CDKN1B degradation and contributes to cell proliferation. Decreases the levels of ubiquitinated proteins during skeletal muscle formation and acts to repress myogenesis. Modulates transcription of major myofibrillar proteins. Also involved in turnover of endoplasmic-reticulum-associated degradation (ERAD) substrates. Mechanistically, deubiquitinates and thereby stabilizes several E3 ligases involved in the ERAD pathway including SYVN1 or MARCHF6. Regulates the stability of other E3 ligases including BIRC2/c-IAP1 and BIRC3/c-IAP2 by preventing their ubiquitination. Required for cells to mount an appropriate response to hypoxia by rescuing HIF1A from degradation in a non-catalytic manner and by mediating the deubiquitination of FUNDC1. Attenuates mitochondrial damage and ferroptosis by targeting and stabilizing NADPH oxidase 4/NOX4. Negatively regulates TNF-alpha- and IL-1beta-triggered NF-kappa-B activation by hydrolyzing 'Lys-27'- and 'Lys-63'-linked polyubiquitin chains from MAP3K7. Modulates also the protein level and aggregation of polyQ-expanded huntingtin/HTT through HSP90AA1. This chain is Ubiquitin carboxyl-terminal hydrolase 19 (USP19), found in Homo sapiens (Human).